Consider the following 166-residue polypeptide: Testis-expressed protein 51 (166 aa).

The first 15 residues, Met1–Gly15, serve as a signal peptide directing secretion. A helical transmembrane segment spans residues Ser138 to Gly154.

It localises to the membrane. The chain is Testis-expressed protein 51 from Homo sapiens (Human).